The chain runs to 614 residues: Laccase 1 (614 aa).

A signal peptide spans 1 to 21 (MSRFARLLLMVVALFFTNAWA). Plastocyanin-like domains follow at residues 30–143 (ITWK…IRPK) and 172–360 (YLVV…MRIP). N75 carries an N-linked (GlcNAc...) asparagine glycan. Residues H79, H81, H123, and H125 each contribute to the Cu cation site. N-linked (GlcNAc...) asparagine glycans are attached at residues N257, N280, N445, N469, and N485. A Plastocyanin-like 3 domain is found at 469-599 (NATRDTENDG…GGMGIAILDG (131 aa)). Positions 507, 510, and 512 each coordinate Cu cation. A glycan (N-linked (GlcNAc...) asparagine) is linked at N527. Cu cation contacts are provided by H581, C582, H583, and H587.

Belongs to the multicopper oxidase family. Requires Cu cation as cofactor.

It is found in the cell surface. The protein operates within pigment biosynthesis. In terms of biological role, laccase; part of the Pks1 gene cluster that mediates the biosynthesis of an anthraquinone derivative pigment that contributes to conidial pigmentation that provides protection from UV radiation, heat and cold stress. The polyketide synthase Pks1 produces 1-acetyl-2,4,6,8-tetrahydroxy-9,10-anthraquinone though condensation of acetyl-CoA with malonyl-CoA. The dehydratase EthD and the laccase Mlac1 further convert the anthraquinone derivative into the final conidial pigment. In Metarhizium majus (strain ARSEF 297), this protein is Laccase 1.